The chain runs to 387 residues: Alpha-sarcoglycan (387 aa).

An N-terminal signal peptide occupies residues 1–23; it reads MAETLFWTPLLVVLLAGLGDTEA. Residues 24–290 lie on the Extracellular side of the membrane; that stretch reads QQTTLHPLVG…APDRDFLVDA (267 aa). Asn174 and Asn246 each carry an N-linked (GlcNAc...) asparagine glycan. A helical membrane pass occupies residues 291-311; that stretch reads LVTLLVPLLVALLLTLLLAYV. The Cytoplasmic portion of the chain corresponds to 312–387; sequence MCCRREGRLK…AQVPLILDQH (76 aa). Phosphoserine is present on Ser377.

This sequence belongs to the sarcoglycan alpha/epsilon family. In terms of assembly, interacts with the syntrophin SNTA1. Cross-link to form 2 major subcomplexes: one consisting of SGCB, SGCD and SGCG and the other consisting of SGCB and SGCD. The association between SGCB and SGCG is particularly strong while SGCA is loosely associated with the other sarcoglycans. In terms of tissue distribution, most strongly expressed in skeletal muscle. Also expressed in cardiac muscle and, at much lower levels, in lung. In the fetus, most abundant in cardiac muscle and, at lower levels, in lung. Also detected in liver and kidney. Not expressed in brain.

The protein resides in the cell membrane. The protein localises to the sarcolemma. Its subcellular location is the cytoplasm. It is found in the cytoskeleton. In terms of biological role, component of the sarcoglycan complex, a subcomplex of the dystrophin-glycoprotein complex which forms a link between the F-actin cytoskeleton and the extracellular matrix. The polypeptide is Alpha-sarcoglycan (SGCA) (Homo sapiens (Human)).